A 122-amino-acid chain; its full sequence is Large ribosomal subunit protein uL14 (122 aa).

This sequence belongs to the universal ribosomal protein uL14 family. As to quaternary structure, part of the 50S ribosomal subunit. Forms a cluster with proteins L3 and L19. In the 70S ribosome, L14 and L19 interact and together make contacts with the 16S rRNA in bridges B5 and B8.

In terms of biological role, binds to 23S rRNA. Forms part of two intersubunit bridges in the 70S ribosome. In Shewanella frigidimarina (strain NCIMB 400), this protein is Large ribosomal subunit protein uL14.